A 414-amino-acid chain; its full sequence is Isocitrate dehydrogenase [NADP] cytoplasmic (414 aa).

N-acetylserine is present on S2. Residue Y42 is modified to Phosphotyrosine. NADP(+) is bound at residue 75–77 (TIT). T77 lines the substrate pocket. At K81 the chain carries N6-acetyllysine. An NADP(+)-binding site is contributed by R82. Residues 94–100 (SPNGTIR) and R109 each bind substrate. At K126 the chain carries N6-succinyllysine. 2 residues coordinate substrate: R132 and K212. N6-acetyllysine occurs at positions 224, 233, and 243. D252 is a binding site for Mn(2+). An NADP(+)-binding site is contributed by K260. D275 and D279 together coordinate Mn(2+). An NADP(+)-binding site is contributed by 310–315 (GTVTRH). K321 carries the post-translational modification N6-acetyllysine. Position 328 (N328) interacts with NADP(+). Phosphoserine is present on S389. An N6-succinyllysine modification is found at K400.

Belongs to the isocitrate and isopropylmalate dehydrogenases family. In terms of assembly, homodimer. Mg(2+) is required as a cofactor. Mn(2+) serves as cofactor. Post-translationally, acetylation at Lys-374 dramatically reduces catalytic activity.

The protein resides in the cytoplasm. The protein localises to the cytosol. It catalyses the reaction D-threo-isocitrate + NADP(+) = 2-oxoglutarate + CO2 + NADPH. In terms of biological role, catalyzes the NADP(+)-dependent oxidative decarboxylation of isocitrate (D-threo-isocitrate) to 2-ketoglutarate (2-oxoglutarate), which is required by other enzymes such as the phytanoyl-CoA dioxygenase. Plays a critical role in the generation of NADPH, an important cofactor in many biosynthesis pathways. May act as a corneal epithelial crystallin and may be involved in maintaining corneal epithelial transparency. The polypeptide is Isocitrate dehydrogenase [NADP] cytoplasmic (IDH1) (Pongo abelii (Sumatran orangutan)).